The following is a 346-amino-acid chain: Enoyl-[acyl-carrier-protein] reductase, mitochondrial (346 aa).

A mitochondrion-targeting transit peptide spans 1-22 (MQKTIRSQALIYRKFGDPLKVL). The Proton donor role is filled by Y59. NADP(+) contacts are provided by residues N131, 157-160 (NSGV), 180-182 (RNR), 249-252 (YGGM), 274-276 (VAV), and K332.

This sequence belongs to the zinc-containing alcohol dehydrogenase family. Quinone oxidoreductase subfamily. Homodimer.

The protein localises to the mitochondrion. It catalyses the reaction a 2,3-saturated acyl-[ACP] + NADP(+) = a (2E)-enoyl-[ACP] + NADPH + H(+). In terms of biological role, catalyzes the NADPH-dependent reduction of trans-2-enoyl thioesters in mitochondrial fatty acid synthesis (fatty acid synthesis type II). Fatty acid chain elongation in mitochondria uses acyl carrier protein (ACP) as an acyl group carrier, but the enzyme accepts both ACP and CoA thioesters as substrates in vitro. May provide the octanoyl chain used for lipoic acid biosynthesis, regulating protein lipoylation and mitochondrial respiratory activity. Involved in iron homeostasis; affecting Fe-S cluster assembly and ceramide metabolism. Required for proper morphology and bioenergetic functions of mitochondria. Required for maintenance of neurons. In Caenorhabditis elegans, this protein is Enoyl-[acyl-carrier-protein] reductase, mitochondrial.